The chain runs to 145 residues: ATP synthase epsilon chain (145 aa).

It belongs to the ATPase epsilon chain family. In terms of assembly, F-type ATPases have 2 components, CF(1) - the catalytic core - and CF(0) - the membrane proton channel. CF(1) has five subunits: alpha(3), beta(3), gamma(1), delta(1), epsilon(1). CF(0) has three main subunits: a, b and c.

It localises to the cell inner membrane. Its function is as follows. Produces ATP from ADP in the presence of a proton gradient across the membrane. The polypeptide is ATP synthase epsilon chain (Francisella tularensis subsp. holarctica (strain FTNF002-00 / FTA)).